Here is a 293-residue protein sequence, read N- to C-terminus: Serine/threonine-protein phosphatase 2A catalytic subunit beta isoform (293 aa).

Mn(2+) contacts are provided by Asp-41, His-43, Asp-69, and Asn-101. The Proton donor role is filled by His-102. Residues His-151 and His-225 each coordinate Mn(2+). At Tyr-291 the chain carries Phosphotyrosine. Leu-293 carries the leucine methyl ester modification.

The protein belongs to the PPP phosphatase family. PP-1 subfamily. Found in a complex with at least ARL2, PPP2CB, PPP2R1A, PPP2R2A, PPP2R5E and TBCD. Interacts with TBCD. PP2A consists of a common heterodimeric core enzyme (composed of a 36 kDa catalytic subunit (subunit C) and a 65 kDa constant regulatory subunit (PR65) (subunit A)) that associates with a variety of regulatory subunits. Proteins that associate with the core dimer include three families of regulatory subunits B (the R2/B/PR55/B55, R3/B''/PR72/PR130/PR59 and R5/B'/B56 families), the 48 kDa variable regulatory subunit, viral proteins, and cell signaling molecules. Binds PPME1. May indirectly interact with SGO1, most probably through regulatory B56 subunits. Interacts with CTTNBP2NL. Interacts with PTPA. Part of the core of STRIPAK complexes composed of PP2A catalytic and scaffolding subunits, the striatins (PP2A regulatory subunits), the striatin-associated proteins MOB4, STRIP1 and STRIP2, PDCD10 and members of the STE20 kinases, such as STK24 and STK26. The cofactor is Mn(2+). Reversibly methyl esterified on Leu-293 by leucine carboxyl methyltransferase 1 (Lcmt1) and protein phosphatase methylesterase 1 (PPME1). Carboxyl methylation influences the affinity of the catalytic subunit for the different regulatory subunits, thereby modulating the PP2A holoenzyme's substrate specificity, enzyme activity and cellular localization. Post-translationally, phosphorylation of either threonine (by autophosphorylation-activated protein kinase) or tyrosine results in inactivation of the phosphatase. Auto-dephosphorylation has been suggested as a mechanism for reactivation. In terms of processing, may be monoubiquitinated by NOSIP.

The protein localises to the cytoplasm. The protein resides in the nucleus. It is found in the chromosome. Its subcellular location is the centromere. It localises to the cytoskeleton. The protein localises to the spindle pole. It carries out the reaction O-phospho-L-seryl-[protein] + H2O = L-seryl-[protein] + phosphate. It catalyses the reaction O-phospho-L-threonyl-[protein] + H2O = L-threonyl-[protein] + phosphate. Functionally, catalytic subunit of protein phosphatase 2A (PP2A), a serine/threonine phosphatase involved in the regulation of a wide variety of enzymes, signal transduction pathways, and cellular events. PP2A can modulate the activity of phosphorylase B kinase, casein kinase 2, mitogen-stimulated S6 kinase, and MAP-2 kinase. Part of the striatin-interacting phosphatase and kinase (STRIPAK) complexes. STRIPAK complexes have critical roles in protein (de)phosphorylation and are regulators of multiple signaling pathways including Hippo, MAPK, nuclear receptor and cytoskeleton remodeling. Different types of STRIPAK complexes are involved in a variety of biological processes such as cell growth, differentiation, apoptosis, metabolism and immune regulation. This Sus scrofa (Pig) protein is Serine/threonine-protein phosphatase 2A catalytic subunit beta isoform (PPP2CB).